We begin with the raw amino-acid sequence, 380 residues long: N-acetylaspartylglutamate synthase A (380 aa).

One can recognise an ATP-grasp domain in the interval 115–300 (FQELAGHGVP…VGAIIADYAM (186 aa)). ATP-binding positions include K154, 189-199 (QKYVKESHGKD), and R215. Mg(2+)-binding residues include D260, E273, and N275. D260, E273, and N275 together coordinate Mn(2+). Phosphoserine is present on S319. The segment at 345 to 370 (GSTSSESEPELGEARDSSVKTMGAPP) is disordered.

The protein belongs to the RimK family. Mg(2+) is required as a cofactor. Requires Mn(2+) as cofactor. As to expression, highly expressed in spinal cord and brain.

The protein resides in the cytoplasm. The catalysed reaction is N-acetyl-L-aspartate + L-glutamate + ATP = N-acetyl-L-aspartyl-L-glutamate + ADP + phosphate + H(+). It carries out the reaction N-acetyl-L-aspartate + 2 L-glutamate + 2 ATP = N-acetyl-L-aspartyl-L-glutamyl-L-glutamate + 2 ADP + 2 phosphate + 2 H(+). Catalyzes the synthesis of N-acetyl-L-aspartyl-L-glutamate (NAAG) and N-acetyl-L-aspartyl-L-glutamyl-L-glutamate. This chain is N-acetylaspartylglutamate synthase A (Rimkla), found in Mus musculus (Mouse).